The sequence spans 221 residues: PKHD-type hydroxylase NATL1_16191 (221 aa).

The Fe2OG dioxygenase domain maps to 80-174 (LIHGVMFTQS…RHVCVGWIQS (95 aa)). Fe cation is bound by residues His-98, Asp-100, and His-155. Arg-165 is a 2-oxoglutarate binding site.

Fe(2+) is required as a cofactor. It depends on L-ascorbate as a cofactor.

In Prochlorococcus marinus (strain NATL1A), this protein is PKHD-type hydroxylase NATL1_16191.